The following is a 102-amino-acid chain: MIHKLTSEERKTRLEGLPHWTAVPGRDAIQRSLRFADFNEAFGFMTRIAIKAQEMNHHPEWFNVYNRVDITLSTHDAHGLTERDILLAQFIDHVCAHTQPAA.

This sequence belongs to the pterin-4-alpha-carbinolamine dehydratase family.

It carries out the reaction (4aS,6R)-4a-hydroxy-L-erythro-5,6,7,8-tetrahydrobiopterin = (6R)-L-erythro-6,7-dihydrobiopterin + H2O. The polypeptide is Putative pterin-4-alpha-carbinolamine dehydratase (Burkholderia ambifaria (strain ATCC BAA-244 / DSM 16087 / CCUG 44356 / LMG 19182 / AMMD) (Burkholderia cepacia (strain AMMD))).